Here is a 991-residue protein sequence, read N- to C-terminus: Collagenase ColT (991 aa).

The first 28 residues, Met-1 to Ala-28, serve as a signal peptide directing secretion. Residues Phe-29 to Pro-52 constitute a propeptide that is removed on maturation. The interval Tyr-53–Leu-727 is S1 metalloprotease domain, degrades FALGPA (furylacryloyl-Leu-Gly-Pro-Ala). Positions Tyr-57–Asn-330 are activator domain. Residues Asp-340 to Asn-611 are catalytic subdomain. Glu-440 is a binding site for Ca(2+). His-465 lines the Zn(2+) pocket. Residue Glu-466 is part of the active site. His-469 contacts Zn(2+). Ca(2+) is bound by residues Gly-473, Ile-477, and Gly-479. Glu-499 provides a ligand contact to Zn(2+). The tract at residues Asp-619–Lys-731 is helper subdomain. 2 collagen-binding domain regions span residues Ile-755 to Asp-870 and Ile-878 to Asn-991. 11 residues coordinate Ca(2+): Glu-757, Glu-759, Asn-761, Asp-784, Asp-787, Glu-883, Glu-885, Asn-887, Asp-888, Asp-910, and Asp-913.

It belongs to the peptidase M9B family. Collagenase subfamily. The cofactor is Ca(2+). Requires Zn(2+) as cofactor.

Its subcellular location is the secreted. It carries out the reaction Digestion of native collagen in the triple helical region at Xaa-|-Gly bonds. With synthetic peptides, a preference is shown for Gly at P3 and P1', Pro and Ala at P2 and P2', and hydroxyproline, Ala or Arg at P3'.. Its activity is regulated as follows. Partially inhibited by 1-10-phenanthroline; inactivation is irreversible. Partially inhibited by EDTA; inactivation is reversible. Inhibited by broad-spectrum zinc metalloprotease inhibitor batimastat. N-aryl mercaptoacetamide-based inhibitors have been isolated that act on clostridial collagenases with submicromolar affinity while having negligibile activity on human collagenases. Functionally, clostridial collagenases are among the most efficient degraders of eukaryotic collagen known; saprophytes use collagen as a carbon source while pathogens additionally digest collagen to aid in host colonization. Has both tripeptidylcarboxypeptidase on Gly-X-Y and endopeptidase activities; the endopeptidase cuts within the triple helix region of collagen while tripeptidylcarboxypeptidase successively digests the exposed ends, thus clostridial collagenases can digest large sections of collagen. The activator domain (residues 57-330) and catalytic subdomain (340-611) open and close around substrate allowing digestion when the protein is closed. In Clostridium tetani (strain Massachusetts / E88), this protein is Collagenase ColT.